We begin with the raw amino-acid sequence, 217 residues long: MTDLDFIDVADLRREYMKGGLRRHELTEQPLVLFEKWLKQACEARLSDPTAMCVATVDENGQPYQRIVLLKHFDEKGLVFYTNLGSRKASHLEHNQRVSLLFPWYPLERQVCFLGKAEKLSAFEVVKYFHSRPKDSQIAAWASKQSSRISARGVLESKFLELKQKFQHGEVPLPSFWGGYRVTFDSVEFWQGRENRLHDRFIYQKSPEGWSIERLAP.

Substrate contacts are provided by residues 13–16 (RREY) and Lys71. Residues 66–71 (RIVLLK), 81–82 (YT), Arg87, Lys88, and Gln110 each bind FMN. Residues Tyr128, Arg132, and Ser136 each contribute to the substrate site. FMN contacts are provided by residues 145–146 (QS) and Trp190. 196 to 198 (RLH) contacts substrate. Arg200 contributes to the FMN binding site.

This sequence belongs to the pyridoxamine 5'-phosphate oxidase family. Homodimer. FMN is required as a cofactor.

The catalysed reaction is pyridoxamine 5'-phosphate + O2 + H2O = pyridoxal 5'-phosphate + H2O2 + NH4(+). It catalyses the reaction pyridoxine 5'-phosphate + O2 = pyridoxal 5'-phosphate + H2O2. It functions in the pathway cofactor metabolism; pyridoxal 5'-phosphate salvage; pyridoxal 5'-phosphate from pyridoxamine 5'-phosphate: step 1/1. Its pathway is cofactor metabolism; pyridoxal 5'-phosphate salvage; pyridoxal 5'-phosphate from pyridoxine 5'-phosphate: step 1/1. In terms of biological role, catalyzes the oxidation of either pyridoxine 5'-phosphate (PNP) or pyridoxamine 5'-phosphate (PMP) into pyridoxal 5'-phosphate (PLP). The chain is Pyridoxine/pyridoxamine 5'-phosphate oxidase from Proteus mirabilis (strain HI4320).